The following is a 214-amino-acid chain: Putative germin-like protein 9-2 (214 aa).

The first 25 residues, 1-25 (MALSYYSLLLLLLAVWAPALTLVMA), serve as a signal peptide directing secretion. N-linked (GlcNAc...) asparagine glycans are attached at residues Asn-44 and Asn-60. A Cupin type-1 domain is found at 56-202 (RKVFNTSSAP…SFKTDVPTIL (147 aa)). His-104, His-106, Glu-111, and His-150 together coordinate Mn(2+).

Belongs to the germin family. As to quaternary structure, oligomer (believed to be a pentamer but probably hexamer).

It localises to the secreted. It is found in the extracellular space. The protein resides in the apoplast. May play a role in plant defense. Probably has no oxalate oxidase activity even if the active site is conserved. This is Putative germin-like protein 9-2 from Oryza sativa subsp. japonica (Rice).